Consider the following 296-residue polypeptide: uncharacterized protein (296 aa).

Residues 7–26 (CFSLVCALGASTYLLWRGWL) form a helical membrane-spanning segment.

It localises to the membrane. This is an uncharacterized protein from Treponema pallidum (strain Nichols).